The chain runs to 281 residues: Putative thiosulfate sulfurtransferase (281 aa).

2 consecutive Rhodanese domains span residues 18–125 (NTDG…ELTK) and 154–274 (AIGN…VPIE). The active-site Cysteine persulfide intermediate is cysteine 233. Arginine 238 provides a ligand contact to substrate.

It carries out the reaction thiosulfate + hydrogen cyanide = thiocyanate + sulfite + 2 H(+). Its function is as follows. May be a sulfotransferase involved in the formation of thiosulfate. This is Putative thiosulfate sulfurtransferase (cysA) from Saccharopolyspora erythraea (Streptomyces erythraeus).